The following is a 233-amino-acid chain: Protein FAM204A (233 aa).

Residues 1–126 (MWSGLLPPGL…HSEPSSNETQ (126 aa)) form a disordered region. Positions 13 to 24 (SDAESNSEDEAT) are enriched in acidic residues. Residues 39–58 (ESIRKTEIIDFSTDEPKTET) are compositionally biased toward basic and acidic residues. Over residues 97–109 (FRGKRRKRSRKDK) the composition is skewed to basic residues. Positions 144–164 (VKRKKVEKSGLEKRIDQAVEE) form a coiled coil.

This chain is Protein FAM204A (FAM204A), found in Homo sapiens (Human).